The following is a 473-amino-acid chain: Ribulose bisphosphate carboxylase large chain (473 aa).

Residues asparagine 116 and threonine 166 each contribute to the substrate site. Lysine 168 acts as the Proton acceptor in catalysis. Lysine 170 is a binding site for substrate. Mg(2+) is bound by residues lysine 194, aspartate 196, and glutamate 197. Lysine 194 is subject to N6-carboxylysine. The active-site Proton acceptor is the histidine 287. Residues arginine 288, histidine 320, and serine 372 each coordinate substrate.

The protein belongs to the RuBisCO large chain family. Type I subfamily. As to quaternary structure, heterohexadecamer of 8 large chains and 8 small chains. It depends on Mg(2+) as a cofactor.

It carries out the reaction 2 (2R)-3-phosphoglycerate + 2 H(+) = D-ribulose 1,5-bisphosphate + CO2 + H2O. The catalysed reaction is D-ribulose 1,5-bisphosphate + O2 = 2-phosphoglycolate + (2R)-3-phosphoglycerate + 2 H(+). Its function is as follows. RuBisCO catalyzes two reactions: the carboxylation of D-ribulose 1,5-bisphosphate, the primary event in carbon dioxide fixation, as well as the oxidative fragmentation of the pentose substrate. Both reactions occur simultaneously and in competition at the same active site. This is Ribulose bisphosphate carboxylase large chain from Nitrobacter winogradskyi (Nitrobacter agilis).